A 125-amino-acid polypeptide reads, in one-letter code: MPTKNQLIRHGREEKRRTDRTRALDQCPQKQGVCLRVSTRTPKKPNSALRKIAKVRLSNRHDIFAYIPGEGHNLQEHSIVLVRGGRVKDLPGVKFHCIRGVKDLLGIPDRRKGRSKYGAERPKSK.

The interval 1–27 (MPTKNQLIRHGREEKRRTDRTRALDQC) is disordered. Positions 10 to 23 (HGREEKRRTDRTRA) are enriched in basic and acidic residues.

Belongs to the universal ribosomal protein uS12 family.

It localises to the mitochondrion. In terms of biological role, protein S12 is involved in the translation initiation step. The chain is Small ribosomal subunit protein uS12m (RPS12) from Triticum aestivum (Wheat).